Consider the following 468-residue polypeptide: UDP-N-acetylmuramate--L-alanine ligase (468 aa).

114-120 (GTHGKTT) is an ATP binding site.

It belongs to the MurCDEF family.

It localises to the cytoplasm. It carries out the reaction UDP-N-acetyl-alpha-D-muramate + L-alanine + ATP = UDP-N-acetyl-alpha-D-muramoyl-L-alanine + ADP + phosphate + H(+). It participates in cell wall biogenesis; peptidoglycan biosynthesis. In terms of biological role, cell wall formation. This chain is UDP-N-acetylmuramate--L-alanine ligase, found in Methylorubrum populi (strain ATCC BAA-705 / NCIMB 13946 / BJ001) (Methylobacterium populi).